The following is a 78-amino-acid chain: Small ribosomal subunit protein bS18 (78 aa).

It belongs to the bacterial ribosomal protein bS18 family. In terms of assembly, part of the 30S ribosomal subunit. Forms a tight heterodimer with protein bS6.

Binds as a heterodimer with protein bS6 to the central domain of the 16S rRNA, where it helps stabilize the platform of the 30S subunit. The sequence is that of Small ribosomal subunit protein bS18 from Limosilactobacillus reuteri (strain DSM 20016) (Lactobacillus reuteri).